We begin with the raw amino-acid sequence, 125 residues long: NADPH-dependent 7-cyano-7-deazaguanine reductase (125 aa).

Cys-41 acts as the Thioimide intermediate in catalysis. Asp-48 (proton donor) is an active-site residue. Substrate is bound by residues 63 to 65 and 82 to 83; these read VEL and HE.

This sequence belongs to the GTP cyclohydrolase I family. QueF type 1 subfamily.

Its subcellular location is the cytoplasm. The enzyme catalyses 7-aminomethyl-7-carbaguanine + 2 NADP(+) = 7-cyano-7-deazaguanine + 2 NADPH + 3 H(+). The protein operates within tRNA modification; tRNA-queuosine biosynthesis. Its function is as follows. Catalyzes the NADPH-dependent reduction of 7-cyano-7-deazaguanine (preQ0) to 7-aminomethyl-7-deazaguanine (preQ1). The sequence is that of NADPH-dependent 7-cyano-7-deazaguanine reductase from Sulfurimonas denitrificans (strain ATCC 33889 / DSM 1251) (Thiomicrospira denitrificans (strain ATCC 33889 / DSM 1251)).